Here is a 692-residue protein sequence, read N- to C-terminus: Elongation factor G (692 aa).

The tr-type G domain maps to E8–V283. Residues A17 to T24, D81 to H85, and N135 to D138 each bind GTP.

It belongs to the TRAFAC class translation factor GTPase superfamily. Classic translation factor GTPase family. EF-G/EF-2 subfamily.

The protein localises to the cytoplasm. Catalyzes the GTP-dependent ribosomal translocation step during translation elongation. During this step, the ribosome changes from the pre-translocational (PRE) to the post-translocational (POST) state as the newly formed A-site-bound peptidyl-tRNA and P-site-bound deacylated tRNA move to the P and E sites, respectively. Catalyzes the coordinated movement of the two tRNA molecules, the mRNA and conformational changes in the ribosome. The polypeptide is Elongation factor G (Caulobacter vibrioides (strain ATCC 19089 / CIP 103742 / CB 15) (Caulobacter crescentus)).